Consider the following 576-residue polypeptide: Mitogen-activated protein kinase 15 (576 aa).

Positions Arg-20 to Lys-50 are disordered. Residues Asn-28–Pro-42 are compositionally biased toward polar residues. A Protein kinase domain is found at Tyr-90–Phe-381. ATP-binding positions include Val-96–Val-104 and Lys-119. Asp-216 functions as the Proton acceptor in the catalytic mechanism. Thr-252 carries the post-translational modification Phosphothreonine. Residues Thr-252–Tyr-254 carry the TXY motif. Tyr-254 bears the Phosphotyrosine mark. A Phosphothreonine modification is found at Thr-257. The tract at residues Glu-458–Met-535 is disordered. The segment covering Leu-477–Thr-501 has biased composition (basic and acidic residues). The span at Ala-504–Gly-520 shows a compositional bias: polar residues.

The protein belongs to the protein kinase superfamily. CMGC Ser/Thr protein kinase family. MAP kinase subfamily. In terms of assembly, interacts with MKK7. Post-translationally, dually phosphorylated on Thr-252 and Tyr-254, which activates the enzyme.

The catalysed reaction is L-seryl-[protein] + ATP = O-phospho-L-seryl-[protein] + ADP + H(+). It carries out the reaction L-threonyl-[protein] + ATP = O-phospho-L-threonyl-[protein] + ADP + H(+). Activated by threonine and tyrosine phosphorylation. The polypeptide is Mitogen-activated protein kinase 15 (MPK15) (Arabidopsis thaliana (Mouse-ear cress)).